A 294-amino-acid polypeptide reads, in one-letter code: Ethanolamine ammonia-lyase small subunit (294 aa).

Residues V207 and E228 each coordinate adenosylcob(III)alamin.

The protein belongs to the EutC family. In terms of assembly, the basic unit is a heterodimer which dimerizes to form tetramers. The heterotetramers trimerize; 6 large subunits form a core ring with 6 small subunits projecting outwards. Requires adenosylcob(III)alamin as cofactor.

Its subcellular location is the bacterial microcompartment. The catalysed reaction is ethanolamine = acetaldehyde + NH4(+). Its pathway is amine and polyamine degradation; ethanolamine degradation. Its function is as follows. Catalyzes the deamination of various vicinal amino-alcohols to oxo compounds. Allows this organism to utilize ethanolamine as the sole source of nitrogen and carbon in the presence of external vitamin B12. This Clostridium tetani (strain Massachusetts / E88) protein is Ethanolamine ammonia-lyase small subunit.